We begin with the raw amino-acid sequence, 470 residues long: Uronate isomerase (470 aa).

It belongs to the metallo-dependent hydrolases superfamily. Uronate isomerase family.

The enzyme catalyses D-glucuronate = D-fructuronate. It carries out the reaction aldehydo-D-galacturonate = keto-D-tagaturonate. The protein operates within carbohydrate metabolism; pentose and glucuronate interconversion. In Salmonella agona (strain SL483), this protein is Uronate isomerase.